A 395-amino-acid polypeptide reads, in one-letter code: Phosphopentomutase (395 aa).

Positions 14, 286, 291, 327, 328, and 339 each coordinate Mn(2+).

The protein belongs to the phosphopentomutase family. It depends on Mn(2+) as a cofactor.

The protein localises to the cytoplasm. The enzyme catalyses 2-deoxy-alpha-D-ribose 1-phosphate = 2-deoxy-D-ribose 5-phosphate. The catalysed reaction is alpha-D-ribose 1-phosphate = D-ribose 5-phosphate. The protein operates within carbohydrate degradation; 2-deoxy-D-ribose 1-phosphate degradation; D-glyceraldehyde 3-phosphate and acetaldehyde from 2-deoxy-alpha-D-ribose 1-phosphate: step 1/2. Functionally, isomerase that catalyzes the conversion of deoxy-ribose 1-phosphate (dRib-1-P) and ribose 1-phosphate (Rib-1-P) to deoxy-ribose 5-phosphate (dRib-5-P) and ribose 5-phosphate (Rib-5-P), respectively. This is Phosphopentomutase from Staphylococcus haemolyticus (strain JCSC1435).